The chain runs to 81 residues: Small ribosomal subunit protein bS16 (81 aa).

It belongs to the bacterial ribosomal protein bS16 family.

The sequence is that of Small ribosomal subunit protein bS16 from Acetivibrio thermocellus (strain ATCC 27405 / DSM 1237 / JCM 9322 / NBRC 103400 / NCIMB 10682 / NRRL B-4536 / VPI 7372) (Clostridium thermocellum).